Here is a 457-residue protein sequence, read N- to C-terminus: Multidrug resistance protein MdtK (457 aa).

Transmembrane regions (helical) follow at residues 11-31 (LLAL…MGVV), 53-73 (IWLP…PIVA), 93-113 (WLAT…RFII), 127-147 (AIGF…YQVL), 160-180 (GMII…AFIY), 188-208 (LGGI…FLMM), 243-263 (LPVG…ALLV), 276-296 (IALN…IAAT), 316-336 (ITAL…SIIF), 357-377 (LMLF…GSGV), 387-407 (IFFI…YLLG), and 416-436 (MGPA…AIMM).

It belongs to the multi antimicrobial extrusion (MATE) (TC 2.A.66.1) family. MdtK subfamily.

It localises to the cell inner membrane. Functionally, multidrug efflux pump that functions probably as a Na(+)/drug antiporter. The chain is Multidrug resistance protein MdtK from Proteus mirabilis (strain HI4320).